Consider the following 555-residue polypeptide: Hydroxylamine reductase (555 aa).

The [4Fe-4S] cluster site is built by C3, C6, C18, and C25. Residues H252, E276, C320, C407, C435, C460, E494, and K496 each contribute to the hybrid [4Fe-2O-2S] cluster site. Residue C407 is modified to Cysteine persulfide.

It belongs to the HCP family. [4Fe-4S] cluster is required as a cofactor. The cofactor is hybrid [4Fe-2O-2S] cluster.

It is found in the cytoplasm. The catalysed reaction is A + NH4(+) + H2O = hydroxylamine + AH2 + H(+). In terms of biological role, catalyzes the reduction of hydroxylamine to form NH(3) and H(2)O. This Burkholderia lata (strain ATCC 17760 / DSM 23089 / LMG 22485 / NCIMB 9086 / R18194 / 383) protein is Hydroxylamine reductase.